A 160-amino-acid polypeptide reads, in one-letter code: Arginine repressor (160 aa).

It belongs to the ArgR family.

It localises to the cytoplasm. The protein operates within amino-acid biosynthesis; L-arginine biosynthesis [regulation]. Functionally, regulates arginine biosynthesis genes. The sequence is that of Arginine repressor from Anaeromyxobacter dehalogenans (strain 2CP-1 / ATCC BAA-258).